Reading from the N-terminus, the 215-residue chain is Ceramide-1-phosphate transfer protein (215 aa).

Positions 57, 61, 107, 111, and 151 each coordinate an N-acylsphingoid base 1-phosphate.

The protein belongs to the GLTP family.

It localises to the cytoplasm. It is found in the cytosol. Its subcellular location is the golgi apparatus. The protein localises to the trans-Golgi network membrane. The protein resides in the cell membrane. It localises to the endosome membrane. It is found in the nucleus outer membrane. It catalyses the reaction N-(hexadecanoyl)-sphing-4-enine-1-phosphate(in) = N-(hexadecanoyl)-sphing-4-enine-1-phosphate(out). It carries out the reaction N-(9Z-octadecenoyl)-sphing-4-enine-1-phosphate(in) = N-(9Z-octadecenoyl)-sphing-4-enine-1-phosphate(out). Its function is as follows. Mediates the intracellular transfer of ceramide-1-phosphate (C1P) between organelle membranes and the cell membrane. Required for normal structure of the Golgi stacks. Can bind phosphoceramides with a variety of aliphatic chains, but has a preference for lipids with saturated C16:0 or monounsaturated C18:1 aliphatic chains, and is inefficient with phosphoceramides containing lignoceryl (C24:0). Plays a role in the regulation of the cellular levels of ceramide-1-phosphate, and thereby contributes to the regulation of phospholipase PLA2G4A activity and the release of arachidonic acid. Has no activity with galactosylceramide, lactosylceramide, sphingomyelin, phosphatidylcholine, phosphatidic acid and ceramide. C1P transfer is stimulated by phosphatidylserine in C1P source vesicles. Regulates autophagy and pyroptosis, but not apoptosis. In Xenopus laevis (African clawed frog), this protein is Ceramide-1-phosphate transfer protein (cptp).